The chain runs to 206 residues: Pyrrolidone-carboxylate peptidase 2 (206 aa).

Active-site residues include E78, C141, and H165.

This sequence belongs to the peptidase C15 family. In terms of assembly, homotetramer.

It localises to the cytoplasm. The enzyme catalyses Release of an N-terminal pyroglutamyl group from a polypeptide, the second amino acid generally not being Pro.. Its function is as follows. Removes 5-oxoproline from various penultimate amino acid residues except L-proline. This is Pyrrolidone-carboxylate peptidase 2 from Caldanaerobacter subterraneus subsp. tengcongensis (strain DSM 15242 / JCM 11007 / NBRC 100824 / MB4) (Thermoanaerobacter tengcongensis).